We begin with the raw amino-acid sequence, 102 residues long: Large ribosomal subunit protein bL21 (102 aa).

The protein belongs to the bacterial ribosomal protein bL21 family. In terms of assembly, part of the 50S ribosomal subunit. Contacts protein L20.

Functionally, this protein binds to 23S rRNA in the presence of protein L20. The sequence is that of Large ribosomal subunit protein bL21 from Bacillus subtilis (strain 168).